We begin with the raw amino-acid sequence, 215 residues long: N-(5'-phosphoribosyl)anthranilate isomerase (215 aa).

It belongs to the TrpF family.

It carries out the reaction N-(5-phospho-beta-D-ribosyl)anthranilate = 1-(2-carboxyphenylamino)-1-deoxy-D-ribulose 5-phosphate. Its pathway is amino-acid biosynthesis; L-tryptophan biosynthesis; L-tryptophan from chorismate: step 3/5. The sequence is that of N-(5'-phosphoribosyl)anthranilate isomerase from Sinorhizobium medicae (strain WSM419) (Ensifer medicae).